The sequence spans 257 residues: MLHNIRIVLVETSHTGNMGSTARAMKTMGLTNLYLVNPLVKPDSQAIALSAGASDVIGKATIVDTLDEALAGCSLVVGTSARSRTLPWPMLEPRECGVRSAREAEHAPVALVFGRERVGLTNDELQKCHYHVAIPANPEYSSLNLAMAVQILAYEVRVAYLDRQQANAPVEEEEEAPYPLVDDLERFYQHLEQVLSHSGFIRQAHPGQIMSKLRRLFTRARPEAQELNILRGMLTSIEKQDKYPQRGTGDTAGKSKD.

S-adenosyl-L-methionine is bound by residues 79 to 81 (TSA), Gly114, Ile134, and 141 to 143 (SSL). A disordered region spans residues 238–257 (EKQDKYPQRGTGDTAGKSKD).

This sequence belongs to the class IV-like SAM-binding methyltransferase superfamily. RNA methyltransferase TrmH family. As to quaternary structure, homodimer.

Its subcellular location is the cytoplasm. The catalysed reaction is cytidine(32) in tRNA + S-adenosyl-L-methionine = 2'-O-methylcytidine(32) in tRNA + S-adenosyl-L-homocysteine + H(+). It carries out the reaction uridine(32) in tRNA + S-adenosyl-L-methionine = 2'-O-methyluridine(32) in tRNA + S-adenosyl-L-homocysteine + H(+). Its function is as follows. Catalyzes the formation of 2'O-methylated cytidine (Cm32) or 2'O-methylated uridine (Um32) at position 32 in tRNA. This is tRNA (cytidine/uridine-2'-O-)-methyltransferase TrmJ (trmJ) from Yersinia pestis bv. Antiqua (strain Antiqua).